The sequence spans 277 residues: Probable diphthine methyl ester synthase (277 aa).

Residues Leu9, Asp89, Gly92, 117–118 (SV), Leu168, Leu227, and His252 each bind S-adenosyl-L-methionine.

The protein belongs to the diphthine synthase family.

The catalysed reaction is 2-[(3S)-amino-3-carboxypropyl]-L-histidyl-[translation elongation factor 2] + 4 S-adenosyl-L-methionine = diphthine methyl ester-[translation elongation factor 2] + 4 S-adenosyl-L-homocysteine + 3 H(+). Its pathway is protein modification; peptidyl-diphthamide biosynthesis. In terms of biological role, S-adenosyl-L-methionine-dependent methyltransferase that catalyzes four methylations of the modified target histidine residue in translation elongation factor 2 (EF-2), to form an intermediate called diphthine methyl ester. The four successive methylation reactions represent the second step of diphthamide biosynthesis. The protein is Probable diphthine methyl ester synthase of Arabidopsis thaliana (Mouse-ear cress).